Reading from the N-terminus, the 98-residue chain is Small ribosomal subunit protein uS17 (98 aa).

Positions 1 to 21 (MADQKGPKYTPAAEKPRGRRK) are disordered. Lys-96 is covalently cross-linked (Isoglutamyl lysine isopeptide (Lys-Gln) (interchain with Q-Cter in protein Pup)).

Belongs to the universal ribosomal protein uS17 family. Part of the 30S ribosomal subunit.

Functionally, one of the primary rRNA binding proteins, it binds specifically to the 5'-end of 16S ribosomal RNA. The protein is Small ribosomal subunit protein uS17 (rpsQ) of Mycolicibacterium smegmatis (strain ATCC 700084 / mc(2)155) (Mycobacterium smegmatis).